A 243-amino-acid chain; its full sequence is Precursor of CEP9 (243 aa).

The first 26 residues, 1–26 (MKLLSITLTSIVISMVFYQTPITTEA), serve as a signal peptide directing secretion. A propeptide spanning residues 28–44 (SLRKTNDQDHFKAGFTD) is cleaved from the precursor. Disordered stretches follow at residues 42 to 63 (FTDDFVPTSPGNSPGVGHKKGN), 91 to 173 (KTGS…VKGF), and 189 to 243 (NGQD…EPKA). Hydroxyproline; partial is present on P48. Hydroxyproline is present on P51. Position 55 is a hydroxyproline; partial (P55). The propeptide occupies 60 to 96 (KKGNVNVEGFQDDFKPTEGRKLLKTNVQDHFKTGSTD). Hydroxyproline occurs at positions 100, 103, and 107. Positions 112–148 (KKGNVNVESSEDDFKHKEGRKLQQTNGQNHFKTGSTD) are excised as a propeptide. Over residues 133–147 (LQQTNGQNHFKTGST) the composition is skewed to polar residues. A hydroxyproline mark is found at P152, P155, and P159. A propeptide spanning residues 164–200 (KKGHANVKGFKDDFAPTEEIRLQKMNGQDHFKTGSTD) is cleaved from the precursor. 3 positions are modified to hydroxyproline: P204, P207, and P211. Residues 216-219 (KKGD) constitute a propeptide that is removed on maturation. 3 positions are modified to hydroxyproline: P223, P226, and P230. Residues 235-243 (AVKNDEPKA) constitute a propeptide that is removed on maturation.

It belongs to the C-terminally encoded plant signaling peptide (CEP) family. As to quaternary structure, interacts with CEP receptors (e.g. CEPR1 and CEPR2). Post-translationally, hydroxylated peptide is more active than non-hydroxylated peptide. In terms of processing, the mature small signaling peptide is generated by proteolytic processing of the longer precursor. In terms of tissue distribution, expressed in lateral root primordia and in lateral roots excluding the meristem region. Also present in the aerial tissues, such as leaf petioles and the shoot apex region.

It is found in the secreted. Its subcellular location is the extracellular space. It localises to the apoplast. Its function is as follows. Extracellular signaling peptide that represses primary root growth rate and significantly inhibits lateral root formation. Modulates leaf morphology. Regulates systemic nitrogen (N)-demand signaling. Mediates up-regulation of genes involved in N uptake and assimilation pathways. This is Precursor of CEP9 from Arabidopsis thaliana (Mouse-ear cress).